We begin with the raw amino-acid sequence, 301 residues long: Glutamyl-Q tRNA(Asp) synthetase (301 aa).

L-glutamate is bound by residues 9–13 (RFAPS) and Glu-45. A 'HIGH' region motif is present at residues 12 to 22 (PSPTGPLHLGS). Positions 101, 103, 121, and 125 each coordinate Zn(2+). Tyr-179 and Arg-197 together coordinate L-glutamate. The short motif at 235-239 (KLSKQ) is the 'KMSKS' region element. An ATP-binding site is contributed by Lys-238.

This sequence belongs to the class-I aminoacyl-tRNA synthetase family. GluQ subfamily. Zn(2+) serves as cofactor.

Functionally, catalyzes the tRNA-independent activation of glutamate in presence of ATP and the subsequent transfer of glutamate onto a tRNA(Asp). Glutamate is transferred on the 2-amino-5-(4,5-dihydroxy-2-cyclopenten-1-yl) moiety of the queuosine in the wobble position of the QUC anticodon. This is Glutamyl-Q tRNA(Asp) synthetase from Thiobacillus denitrificans (strain ATCC 25259 / T1).